A 196-amino-acid chain; its full sequence is Probable malonic semialdehyde reductase RutE (196 aa).

Belongs to the nitroreductase family. HadB/RutE subfamily. The cofactor is FMN.

It carries out the reaction 3-hydroxypropanoate + NADP(+) = 3-oxopropanoate + NADPH + H(+). Its function is as follows. May reduce toxic product malonic semialdehyde to 3-hydroxypropionic acid, which is excreted. This is Probable malonic semialdehyde reductase RutE from Shigella dysenteriae serotype 1 (strain Sd197).